We begin with the raw amino-acid sequence, 668 residues long: Transketolase 2 (668 aa).

H26 lines the substrate pocket. Residues H66 and 114–116 each bind thiamine diphosphate; that span reads GPL. A Mg(2+)-binding site is contributed by D155. G156 and N185 together coordinate thiamine diphosphate. Positions 185 and 187 each coordinate Mg(2+). Positions 261, 358, and 385 each coordinate substrate. Residue H261 participates in thiamine diphosphate binding. E413 serves as the catalytic Proton donor. F439 contacts thiamine diphosphate. The substrate site is built by H463, D471, and R522.

This sequence belongs to the transketolase family. Homodimer. The cofactor is Mg(2+). Requires Ca(2+) as cofactor. Mn(2+) is required as a cofactor. It depends on Co(2+) as a cofactor. Thiamine diphosphate serves as cofactor.

The catalysed reaction is D-sedoheptulose 7-phosphate + D-glyceraldehyde 3-phosphate = aldehydo-D-ribose 5-phosphate + D-xylulose 5-phosphate. In terms of biological role, catalyzes the transfer of a two-carbon ketol group from a ketose donor to an aldose acceptor, via a covalent intermediate with the cofactor thiamine pyrophosphate. In Pasteurella multocida (strain Pm70), this protein is Transketolase 2 (tktB).